A 235-amino-acid chain; its full sequence is Large ribosomal subunit protein uL3 (235 aa).

The segment at 150-189 (AGGPASHGSGHHRHAGSTGMRSTPGRGLPGGKKAGQMGNE) is disordered.

It belongs to the universal ribosomal protein uL3 family. As to quaternary structure, part of the 50S ribosomal subunit. Forms a cluster with proteins L14 and L19.

Functionally, one of the primary rRNA binding proteins, it binds directly near the 3'-end of the 23S rRNA, where it nucleates assembly of the 50S subunit. The protein is Large ribosomal subunit protein uL3 of Protochlamydia amoebophila (strain UWE25).